Consider the following 385-residue polypeptide: MYVRHLGLRDFRSWACVDLELHPGRTVFVGPNGYGKTNLIEALWYSTTLGSHRVSADLPLIRVGTDRAVISTIVVNDGRECAVDLEIATGRVNKARLNRSSVRSTRDVVGVLRAVLFAPEDLGLVRGDPADRRRYLDDLAIVRRPAIAAVRAEYERVVRQRTALLKSVPGARYRGDRGVFDTLEVWDSRLAEHGAELVAARIDLVNQLAPEVKKAYQLLAPESRSASIGYRASMDVTGPSEQSDTDRQLLAARLLAALAARRDAELERGVCLVGPHRDDLILRLGDQPAKGFASHGEAWSLAVALRLAAYQLLRVDGGEPVLLLDDVFAELDVMRRRALATAAESAEQVLVTAAVLEDIPAGWDARRVHIDVRADDTGSMSVVLP.

30–37 (GPNGYGKT) contributes to the ATP binding site.

It belongs to the RecF family.

It is found in the cytoplasm. Functionally, the RecF protein is involved in DNA metabolism; it is required for DNA replication and normal SOS inducibility. RecF binds preferentially to single-stranded, linear DNA. It also seems to bind ATP. The protein is DNA replication and repair protein RecF of Mycobacterium bovis (strain ATCC BAA-935 / AF2122/97).